Consider the following 369-residue polypeptide: Transforming protein Maf (369 aa).

Disordered regions lie at residues 57 to 85 (STPM…TDQK) and 169 to 243 (GGAP…GLHF). Over residues 173-183 (HYHHHHHHPHH) the composition is skewed to basic residues. A compositionally biased stretch (gly residues) spans 184–193 (GGGGGGGGHP). The segment covering 194–211 (HGAAPGSAPPSSASSSAA) has biased composition (low complexity). A compositionally biased stretch (gly residues) spans 212 to 226 (GSGGGGGGGGGGAGG). Residues 274–299 (RLKQKRRTLKNRGYAQSCRFKRVQQR) are basic motif. A bZIP domain is found at 274-337 (RLKQKRRTLK…DAYKEKYEKL (64 aa)). The leucine-zipper stretch occupies residues 302–323 (LESEKNQLLQQVEHLKQEISRL). A disordered region spans residues 341–369 (GFRENGSSSDNPSSPEFFMYPRESSTTVM). Residues 345-354 (NGSSSDNPSS) show a composition bias toward polar residues.

It belongs to the bZIP family. Maf subfamily.

The protein resides in the host nucleus. Its function is as follows. Might be a transcriptional trans-activator. This chain is Transforming protein Maf (V-MAF), found in Galliformes.